The primary structure comprises 305 residues: Auxin-responsive protein IAA27 (305 aa).

The EAR-like (transcriptional repression) signature appears at 45–49 (LRLGL). 2 disordered regions span residues 96–119 (TTAT…GKST) and 155–180 (KNSM…AKSG). The span at 155 to 170 (KNSMASSQSQKPGNNS) shows a compositional bias: polar residues. The PB1 domain maps to 185 to 287 (CLYVKVSMEG…SCKKLRIMKS (103 aa)).

Belongs to the Aux/IAA family. As to quaternary structure, homodimers and heterodimers. Interacts with phytochrome A. Interacts with TPL.

The protein resides in the nucleus. Aux/IAA proteins are short-lived transcriptional factors that function as repressors of early auxin response genes at low auxin concentrations. Repression is thought to result from the interaction with auxin response factors (ARFs), proteins that bind to the auxin-responsive promoter element (AuxRE). Formation of heterodimers with ARF proteins may alter their ability to modulate early auxin response genes expression. The protein is Auxin-responsive protein IAA27 (IAA27) of Arabidopsis thaliana (Mouse-ear cress).